The chain runs to 714 residues: Fumarate reductase flavoprotein subunit (714 aa).

Residues Gly13 to Ala16, Ser42 to Ser44, and Gly49 to Gly50 each bind FAD. His43 bears the Tele-8alpha-FAD histidine mark. Active-site residues include His257 and Arg273. Residues Glu420 and Ser436–Val437 contribute to the FAD site.

It belongs to the FAD-dependent oxidoreductase 2 family. FRD/SDH subfamily. In terms of assembly, part of an enzyme complex containing three subunits: a flavoprotein (frdA), an iron-sulfur protein (frdB), and diheme cytochrome b (frdC). Requires FAD as cofactor.

It is found in the cell inner membrane. The enzyme catalyses a quinone + succinate = fumarate + a quinol. Its function is as follows. The fumarate reductase enzyme complex is required for fumarate respiration. In Helicobacter pylori (strain J99 / ATCC 700824) (Campylobacter pylori J99), this protein is Fumarate reductase flavoprotein subunit (frdA).